The following is a 212-amino-acid chain: Probable dual specificity protein phosphatase DDB_G0269404 (212 aa).

The Tyrosine-protein phosphatase domain maps to 30–169 (FDAQEVIPNL…LINYEATILK (140 aa)). Catalysis depends on cysteine 113, which acts as the Phosphocysteine intermediate.

Belongs to the protein-tyrosine phosphatase family. Non-receptor class dual specificity subfamily.

It catalyses the reaction O-phospho-L-tyrosyl-[protein] + H2O = L-tyrosyl-[protein] + phosphate. The catalysed reaction is O-phospho-L-seryl-[protein] + H2O = L-seryl-[protein] + phosphate. The enzyme catalyses O-phospho-L-threonyl-[protein] + H2O = L-threonyl-[protein] + phosphate. Its function is as follows. Has a dual specificity toward Ser/Thr and Tyr-containing proteins. The polypeptide is Probable dual specificity protein phosphatase DDB_G0269404 (Dictyostelium discoideum (Social amoeba)).